The primary structure comprises 254 residues: MLQTEMKVIQQTEIADKVYELILSGECVADMSPGQFLMLKPSRSDLLMRRPISICSYDKTAKTCILLYRVEGDGTKDFSSLSKGDSIDVLGPLGKGFDLNTIPAPKTALLIGGGIGVPPMYQLGKELADKGVQVTFVNGFQSEKDSFYEKEMTEYGTVHIATVDGSYGTQGFVTDITKNFPEEPDVIYSCGPKAMLQAVKASFPETKTYLSLEERMACGIGACYACVCPKAGDTKKQFKVCEDGPVFRADEVSL.

Residues 1-99 form the FAD-binding FR-type domain; that stretch reads MLQTEMKVIQ…LGPLGKGFDL (99 aa). FAD-binding positions include 50 to 53, 67 to 69, and 74 to 75; these read RPIS, LYR, and GT. 4 residues coordinate [2Fe-2S] cluster: cysteine 218, cysteine 223, cysteine 226, and cysteine 241.

The protein belongs to the PyrK family. In terms of assembly, heterotetramer of 2 PyrK and 2 PyrD type B subunits. Requires [2Fe-2S] cluster as cofactor. The cofactor is FAD.

It participates in pyrimidine metabolism; UMP biosynthesis via de novo pathway; orotate from (S)-dihydroorotate (NAD(+) route): step 1/1. Responsible for channeling the electrons from the oxidation of dihydroorotate from the FMN redox center in the PyrD type B subunit to the ultimate electron acceptor NAD(+). This is Dihydroorotate dehydrogenase B (NAD(+)), electron transfer subunit from Listeria innocua serovar 6a (strain ATCC BAA-680 / CLIP 11262).